An 821-amino-acid chain; its full sequence is Dapper homolog 1 (821 aa).

Positions 88 to 136 form a coiled coil; sequence LNTEEKLLEENILLLRKQLNCLRRRDAGLINQLQELDRQISDLRLDTET. Disordered regions lie at residues 288-312, 386-432, 564-615, and 627-655; these read SKPG…SSWH, QDAS…STTN, NSAS…KTKR, and ERHT…VLAK. Residues 388–400 are compositionally biased toward low complexity; that stretch reads ASATSTEPSTASP. Residues 401 to 432 are compositionally biased toward polar residues; that stretch reads QRQWSAESKGGTPQNGAYLSSSQPQNSYSTTN. Composition is skewed to basic residues over residues 584–593, 601–615, and 639–649; these read DKHRTGSRRT, HLHK…KTKR, and AQRHHGHHRHH. Residues 818–821 carry the PDZ-binding motif; the sequence is MTTV.

Belongs to the dapper family. In terms of assembly, interacts with dvl2.

It is found in the cytoplasm. Its function is as follows. Involved in regulation of intracellular signaling pathways during development. Specifically thought to play a role in canonical and/or non-canonical Wnt signaling pathways through interaction with DSH (Dishevelled) family proteins. Binds to dvl2 and may regulate the degradation of ctnnb1/beta-catenin, thereby modulating the transcriptional activation of target genes of the Wnt signaling pathway. Seems to activate the canonical Wnt signaling pathway. This chain is Dapper homolog 1 (dact1), found in Danio rerio (Zebrafish).